Reading from the N-terminus, the 146-residue chain is Hemoglobin subunit beta/beta' (146 aa).

The 145-residue stretch at 2-146 folds into the Globin domain; sequence HWSAEEKQLI…VAHALARKYH (145 aa). The heme b site is built by His-63 and His-92.

Belongs to the globin family. As to quaternary structure, heterotetramer of two alpha chains and two beta chains. In terms of tissue distribution, red blood cells.

Functionally, involved in oxygen transport from the lung to the various peripheral tissues. This chain is Hemoglobin subunit beta/beta' (HBB), found in Chroicocephalus ridibundus (Black-headed gull).